Reading from the N-terminus, the 291-residue chain is Nucleotide-binding protein PPA0813 (291 aa).

Glycine 17–arginine 24 is a binding site for ATP. Aspartate 66–serine 69 contacts GTP.

It belongs to the RapZ-like family.

Displays ATPase and GTPase activities. In Cutibacterium acnes (strain DSM 16379 / KPA171202) (Propionibacterium acnes), this protein is Nucleotide-binding protein PPA0813.